We begin with the raw amino-acid sequence, 287 residues long: POU domain class 2-associating factor 2 (287 aa).

The OCA domain maps to 10–32; it reads KRVYQGVRVKHTVKDLLAEKRSR. Disordered stretches follow at residues 24–51, 161–199, and 247–279; these read DLLA…PPFI, TVPD…TQHR, and PKVG…MAWG. 2 stretches are compositionally biased toward polar residues: residues 33 to 49 and 180 to 199; these read QTSN…SQPP and LPPS…TQHR.

The protein belongs to the POU2AF family. Interacts with POU2F3 (via the POU domain) in a DNA-dependent manner; this interaction recruits POU2AF2 to chromatin and increases POU2F3 transactivation activity. Expressed in tuft cells of the small intestine, trachea, thymus, and colon.

The protein resides in the cytoplasm. It localises to the cytosol. The protein localises to the nucleus. Transcriptional coactivator of POU2F3. This complex drives the development of tuft cells, a rare chemosensory cells that coordinate immune and neural functions within mucosal epithelial tissues. The sequence is that of POU domain class 2-associating factor 2 from Mus musculus (Mouse).